The primary structure comprises 322 residues: Ribosomal RNA small subunit methyltransferase H (322 aa).

S-adenosyl-L-methionine-binding positions include G34–H36, D59, F86, D112, and Q119.

The protein belongs to the methyltransferase superfamily. RsmH family.

It is found in the cytoplasm. The catalysed reaction is cytidine(1402) in 16S rRNA + S-adenosyl-L-methionine = N(4)-methylcytidine(1402) in 16S rRNA + S-adenosyl-L-homocysteine + H(+). In terms of biological role, specifically methylates the N4 position of cytidine in position 1402 (C1402) of 16S rRNA. This is Ribosomal RNA small subunit methyltransferase H from Chlorobium limicola (strain DSM 245 / NBRC 103803 / 6330).